The primary structure comprises 381 residues: MTNNESKGPFEGLLVIDMTHVLNGPFGTQLLCNMGARVIKVEPPGHGDDTRTFGPYVDGQSLYYSFINHGKESVVLDLKNDHDKSIFINMLKQADVLAENFRPGTMEKLGFSWETLQEINPRLIYASSSGFGHTGPLKDAPAYDTIIQAMSGIMMETGYPDAPPVRVGTSLADLCGGVYLFSGIVSALYGREKSQRGAHVDIAMFDATLSFLEHGLMAYIATGKSPQRLGNRHPYMAPFDVFNTQDKPITICCGNDKLFSALCQALELTELVNDPRFSSNILRVQNQAILKQYIERTLKTQAAEVWLARIHEVGVPVAPLLSVAEAIKLPQTQARNMLIEAGGIMMPGNPIKISGCADPHVMPGAATLDQHGEQIRQEFSS.

The active site involves His233.

The protein belongs to the CoA-transferase III family. Homodimer.

It catalyses the reaction oxalate + acetyl-CoA = oxalyl-CoA + acetate. In terms of biological role, involved in the catabolism of oxalate and in the adapatation to low pH. ACOCT serves to prime the oxalate-induced acid tolerance response (ATR) cycle by producing substrate for oxalyl-CoA decarboxylase (OXC) and formyl-coenzyme A transferase (FCOCT). Catalyzes the reversible conversion of acetyl-CoA and oxalate to oxalyl-CoA and acetate. It can also use formyl-CoA and oxalate to produce oxalyl-CoA and formate with significantly reduced specific activity. The sequence is that of Acetyl-CoA:oxalate CoA-transferase (yfdE) from Escherichia coli (strain K12).